The chain runs to 303 residues: Ribosomal RNA small subunit methyltransferase H (303 aa).

Residues 32–34 (GGH), D52, F78, D99, and Q106 each bind S-adenosyl-L-methionine.

The protein belongs to the methyltransferase superfamily. RsmH family.

The protein localises to the cytoplasm. It catalyses the reaction cytidine(1402) in 16S rRNA + S-adenosyl-L-methionine = N(4)-methylcytidine(1402) in 16S rRNA + S-adenosyl-L-homocysteine + H(+). Its function is as follows. Specifically methylates the N4 position of cytidine in position 1402 (C1402) of 16S rRNA. This chain is Ribosomal RNA small subunit methyltransferase H, found in Acinetobacter baylyi (strain ATCC 33305 / BD413 / ADP1).